The sequence spans 433 residues: 4-hydroxy-3-methylbut-2-en-1-yl diphosphate synthase (flavodoxin) (433 aa).

Residues 1 to 10 (MRYMQDSSMP) are compositionally biased toward polar residues. The tract at residues 1 to 24 (MRYMQDSSMPCQDASPPDVGAAPR) is disordered. The [4Fe-4S] cluster site is built by C320, C323, C366, and E373.

It belongs to the IspG family. [4Fe-4S] cluster is required as a cofactor.

It catalyses the reaction (2E)-4-hydroxy-3-methylbut-2-enyl diphosphate + oxidized [flavodoxin] + H2O + 2 H(+) = 2-C-methyl-D-erythritol 2,4-cyclic diphosphate + reduced [flavodoxin]. The protein operates within isoprenoid biosynthesis; isopentenyl diphosphate biosynthesis via DXP pathway; isopentenyl diphosphate from 1-deoxy-D-xylulose 5-phosphate: step 5/6. Converts 2C-methyl-D-erythritol 2,4-cyclodiphosphate (ME-2,4cPP) into 1-hydroxy-2-methyl-2-(E)-butenyl 4-diphosphate. This is 4-hydroxy-3-methylbut-2-en-1-yl diphosphate synthase (flavodoxin) from Bordetella bronchiseptica (strain ATCC BAA-588 / NCTC 13252 / RB50) (Alcaligenes bronchisepticus).